Here is an 878-residue protein sequence, read N- to C-terminus: Alanine--tRNA ligase (878 aa).

Residues His567, His571, Cys669, and His673 each coordinate Zn(2+).

Belongs to the class-II aminoacyl-tRNA synthetase family. It depends on Zn(2+) as a cofactor.

It localises to the cytoplasm. The catalysed reaction is tRNA(Ala) + L-alanine + ATP = L-alanyl-tRNA(Ala) + AMP + diphosphate. Its function is as follows. Catalyzes the attachment of alanine to tRNA(Ala) in a two-step reaction: alanine is first activated by ATP to form Ala-AMP and then transferred to the acceptor end of tRNA(Ala). Also edits incorrectly charged Ser-tRNA(Ala) and Gly-tRNA(Ala) via its editing domain. This Rickettsia conorii (strain ATCC VR-613 / Malish 7) protein is Alanine--tRNA ligase.